Consider the following 486-residue polypeptide: Putative ankyrin repeat protein R634 (486 aa).

ANK repeat units lie at residues 84-113 (DLFK…NVRE), 114-143 (HNDV…DLYA), 145-173 (KNTL…NFRE), 174-203 (NCDT…DVNS), 205-233 (SHKS…NIDW), 234-263 (RHNY…NLEI), 265-293 (DGCI…EIGF), 307-336 (NKIT…ATIK), 337-366 (EKNY…SLEK), 367-396 (KINK…NVKT), 398-426 (EGLP…DVTS), and 427-456 (YDNY…NVND).

This chain is Putative ankyrin repeat protein R634, found in Acanthamoeba polyphaga (Amoeba).